Here is a 284-residue protein sequence, read N- to C-terminus: L-ribulose-5-phosphate 3-epimerase UlaE (284 aa).

This sequence belongs to the L-ribulose-5-phosphate 3-epimerase family.

The enzyme catalyses L-ribulose 5-phosphate = L-xylulose 5-phosphate. It functions in the pathway cofactor degradation; L-ascorbate degradation; D-xylulose 5-phosphate from L-ascorbate: step 3/4. Its function is as follows. Catalyzes the isomerization of L-xylulose-5-phosphate to L-ribulose-5-phosphate. Is involved in the anaerobic L-ascorbate utilization. This chain is L-ribulose-5-phosphate 3-epimerase UlaE, found in Salmonella choleraesuis (strain SC-B67).